Here is a 434-residue protein sequence, read N- to C-terminus: Enolase (434 aa).

Residue Gln-163 participates in (2R)-2-phosphoglycerate binding. The Proton donor role is filled by Glu-205. Positions 242, 291, and 318 each coordinate Mg(2+). Residues Lys-343, Arg-372, Ser-373, and Lys-394 each coordinate (2R)-2-phosphoglycerate. Residue Lys-343 is the Proton acceptor of the active site.

The protein belongs to the enolase family. It depends on Mg(2+) as a cofactor.

It localises to the cytoplasm. The protein localises to the secreted. It is found in the cell surface. The enzyme catalyses (2R)-2-phosphoglycerate = phosphoenolpyruvate + H2O. Its pathway is carbohydrate degradation; glycolysis; pyruvate from D-glyceraldehyde 3-phosphate: step 4/5. Catalyzes the reversible conversion of 2-phosphoglycerate (2-PG) into phosphoenolpyruvate (PEP). It is essential for the degradation of carbohydrates via glycolysis. The chain is Enolase from Streptococcus intermedius.